We begin with the raw amino-acid sequence, 212 residues long: ATP-dependent Clp protease proteolytic subunit (212 aa).

S106 (nucleophile) is an active-site residue. The active site involves H131.

It belongs to the peptidase S14 family. In terms of assembly, fourteen ClpP subunits assemble into 2 heptameric rings which stack back to back to give a disk-like structure with a central cavity, resembling the structure of eukaryotic proteasomes.

The protein localises to the cytoplasm. It carries out the reaction Hydrolysis of proteins to small peptides in the presence of ATP and magnesium. alpha-casein is the usual test substrate. In the absence of ATP, only oligopeptides shorter than five residues are hydrolyzed (such as succinyl-Leu-Tyr-|-NHMec, and Leu-Tyr-Leu-|-Tyr-Trp, in which cleavage of the -Tyr-|-Leu- and -Tyr-|-Trp bonds also occurs).. Cleaves peptides in various proteins in a process that requires ATP hydrolysis. Has a chymotrypsin-like activity. Plays a major role in the degradation of misfolded proteins. This is ATP-dependent Clp protease proteolytic subunit from Rhodopseudomonas palustris (strain HaA2).